The chain runs to 165 residues: Cyclic pyranopterin monophosphate synthase (165 aa).

Residues 83–85 (FCH) and 120–121 (ME) contribute to the substrate site. Residue aspartate 135 is part of the active site.

This sequence belongs to the MoaC family. In terms of assembly, homohexamer; trimer of dimers.

It catalyses the reaction (8S)-3',8-cyclo-7,8-dihydroguanosine 5'-triphosphate = cyclic pyranopterin phosphate + diphosphate. The protein operates within cofactor biosynthesis; molybdopterin biosynthesis. Functionally, catalyzes the conversion of (8S)-3',8-cyclo-7,8-dihydroguanosine 5'-triphosphate to cyclic pyranopterin monophosphate (cPMP). This is Cyclic pyranopterin monophosphate synthase from Xanthomonas campestris pv. campestris (strain B100).